A 230-amino-acid polypeptide reads, in one-letter code: uncharacterized protein (230 aa).

A run of 7 helical transmembrane segments spans residues 8 to 28 (SLIL…TMAF), 45 to 65 (SIIL…FIIF), 72 to 92 (LVLL…FLYL), 109 to 129 (PFSL…SVIS), 141 to 161 (IYVL…LLLA), 176 to 196 (MGIL…AIIF), and 203 to 223 (IYFL…LILF).

The protein to P.aeruginosa PA0043 and M.thermoautotrophicum MTH1451.

The protein resides in the cell membrane. This is an uncharacterized protein from Aquifex aeolicus (strain VF5).